The following is a 670-amino-acid chain: Penicillin-binding protein activator LpoA (670 aa).

A signal peptide spans 1-26; it reads MLPSKVVHRKAVRTVPLLLAALIFAG. Cys27 carries the N-palmitoyl cysteine lipid modification. Cys27 carries the S-diacylglycerol cysteine lipid modification.

It belongs to the LpoA family. As to quaternary structure, interacts with PBP1a.

Its subcellular location is the cell outer membrane. Functionally, regulator of peptidoglycan synthesis that is essential for the function of penicillin-binding protein 1A (PBP1a). This chain is Penicillin-binding protein activator LpoA, found in Erwinia tasmaniensis (strain DSM 17950 / CFBP 7177 / CIP 109463 / NCPPB 4357 / Et1/99).